Here is an 88-residue protein sequence, read N- to C-terminus: MRLFLSLPVLVVVLAMVLEGPAPAQAAPEISRTFERIPDKLKEFGNTLEDKAREVLETIKQSDIPAKTRNWFSETYNKVKEQLKTAFS.

The signal sequence occupies residues 1–26; sequence MRLFLSLPVLVVVLAMVLEGPAPAQA.

This sequence belongs to the apolipoprotein C1 family.

Its subcellular location is the secreted. In terms of biological role, inhibitor of lipoprotein binding to the low density lipoprotein (LDL) receptor, LDL receptor-related protein, and very low density lipoprotein (VLDL) receptor. Associates with high density lipoproteins (HDL) and the triacylglycerol-rich lipoproteins in the plasma and makes up about 10% of the protein of the VLDL and 2% of that of HDL. Appears to interfere directly with fatty acid uptake and is also the major plasma inhibitor of cholesteryl ester transfer protein (CETP). Binds free fatty acids and reduces their intracellular esterification. Modulates the interaction of APOE with beta-migrating VLDL and inhibits binding of beta-VLDL to the LDL receptor-related protein. The protein is Apolipoprotein C-I (APOC1) of Ailurus fulgens (Himalayan red panda).